We begin with the raw amino-acid sequence, 142 residues long: ATP synthase epsilon chain, chloroplastic (142 aa).

This sequence belongs to the ATPase epsilon chain family. As to quaternary structure, F-type ATPases have 2 components, CF(1) - the catalytic core - and CF(0) - the membrane proton channel. CF(1) has five subunits: alpha(3), beta(3), gamma(1), delta(1), epsilon(1). CF(0) has three main subunits: a, b and c.

It is found in the plastid. Its subcellular location is the chloroplast thylakoid membrane. Produces ATP from ADP in the presence of a proton gradient across the membrane. The polypeptide is ATP synthase epsilon chain, chloroplastic (Ostreococcus tauri).